Reading from the N-terminus, the 204-residue chain is FMN-dependent NADH:quinone oxidoreductase (204 aa).

Residues Ser-10 and 15-17 each bind FMN; that span reads SLS.

It belongs to the azoreductase type 1 family. As to quaternary structure, homodimer. The cofactor is FMN.

The enzyme catalyses 2 a quinone + NADH + H(+) = 2 a 1,4-benzosemiquinone + NAD(+). The catalysed reaction is N,N-dimethyl-1,4-phenylenediamine + anthranilate + 2 NAD(+) = 2-(4-dimethylaminophenyl)diazenylbenzoate + 2 NADH + 2 H(+). Its function is as follows. Quinone reductase that provides resistance to thiol-specific stress caused by electrophilic quinones. Also exhibits azoreductase activity. Catalyzes the reductive cleavage of the azo bond in aromatic azo compounds to the corresponding amines. This chain is FMN-dependent NADH:quinone oxidoreductase, found in Rhizobium johnstonii (strain DSM 114642 / LMG 32736 / 3841) (Rhizobium leguminosarum bv. viciae).